Reading from the N-terminus, the 333-residue chain is MIERIWSGQSRLYWLLLPLSWLYGLITFLIRQSYRLGWRKSWRSPVPIVVVGNLTAGGNGKTPVVIWLVEQLQRRGYRVGVVSRGYGGKAERYPLLLNESVTTVQAGDEPVLIFQRTGAPVAVAPRRAEAVSALLARHTLDVVITDDGLQHYALARDIELVVIDGMRRFGNGWWLPAGPMRERESRLASVDAVVVNGGVPQTNEIGMTLTAGMAVNLLSGESRSLSQLYDVVAMAGIGHPPRFFATLRDAGVSIAREVAFADHQSYQPEQLALLTQDTMQPLLMTEKDAVKCKAFAQDNWWYLPVDAVLAEPQGTQLLDKLEDMLNRNVGSRT.

55 to 62 (TAGGNGKT) lines the ATP pocket.

This sequence belongs to the LpxK family.

The enzyme catalyses a lipid A disaccharide + ATP = a lipid IVA + ADP + H(+). The protein operates within glycolipid biosynthesis; lipid IV(A) biosynthesis; lipid IV(A) from (3R)-3-hydroxytetradecanoyl-[acyl-carrier-protein] and UDP-N-acetyl-alpha-D-glucosamine: step 6/6. Transfers the gamma-phosphate of ATP to the 4'-position of a tetraacyldisaccharide 1-phosphate intermediate (termed DS-1-P) to form tetraacyldisaccharide 1,4'-bis-phosphate (lipid IVA). In Pectobacterium atrosepticum (strain SCRI 1043 / ATCC BAA-672) (Erwinia carotovora subsp. atroseptica), this protein is Tetraacyldisaccharide 4'-kinase.